The chain runs to 341 residues: Dehydration-responsive element-binding protein 2C (341 aa).

Positions R8–K48 match the Nuclear localization signal motif. A disordered region spans residues S36–G63. Basic residues predominate over residues S45–M59. The AP2/ERF DNA-binding region spans D71–P128.

The protein belongs to the AP2/ERF transcription factor family. ERF subfamily.

It is found in the nucleus. Its function is as follows. Transcriptional activator that binds specifically to the DNA sequence 5'-[AG]CCGAC-3'. Binding to the C-repeat/DRE element mediates high salinity- and abscisic acid-inducible transcription. In Arabidopsis thaliana (Mouse-ear cress), this protein is Dehydration-responsive element-binding protein 2C (DREB2C).